Consider the following 108-residue polypeptide: Phosphoribosyl-ATP pyrophosphatase (108 aa).

This sequence belongs to the PRA-PH family.

It localises to the cytoplasm. The catalysed reaction is 1-(5-phospho-beta-D-ribosyl)-ATP + H2O = 1-(5-phospho-beta-D-ribosyl)-5'-AMP + diphosphate + H(+). Its pathway is amino-acid biosynthesis; L-histidine biosynthesis; L-histidine from 5-phospho-alpha-D-ribose 1-diphosphate: step 2/9. This Aromatoleum aromaticum (strain DSM 19018 / LMG 30748 / EbN1) (Azoarcus sp. (strain EbN1)) protein is Phosphoribosyl-ATP pyrophosphatase.